The following is a 274-amino-acid chain: Urease accessory protein UreD 2 (274 aa).

The protein belongs to the UreD family. In terms of assembly, ureD, UreF and UreG form a complex that acts as a GTP-hydrolysis-dependent molecular chaperone, activating the urease apoprotein by helping to assemble the nickel containing metallocenter of UreC. The UreE protein probably delivers the nickel.

It is found in the cytoplasm. Required for maturation of urease via the functional incorporation of the urease nickel metallocenter. This Brucella anthropi (strain ATCC 49188 / DSM 6882 / CCUG 24695 / JCM 21032 / LMG 3331 / NBRC 15819 / NCTC 12168 / Alc 37) (Ochrobactrum anthropi) protein is Urease accessory protein UreD 2.